Reading from the N-terminus, the 126-residue chain is Protein ApaG (126 aa).

Residues 2–126 (NQLAASVSVD…FRLSIPGLLH (125 aa)) form the ApaG domain.

The polypeptide is Protein ApaG (Shewanella pealeana (strain ATCC 700345 / ANG-SQ1)).